A 483-amino-acid chain; its full sequence is V-type proton ATPase subunit H (483 aa).

Residue Ser-483 is modified to Phosphoserine.

Belongs to the V-ATPase H subunit family. As to quaternary structure, V-ATPase is a heteromultimeric enzyme made up of two complexes: the ATP-hydrolytic V1 complex and the proton translocation V0 complex. The V1 complex consists of three catalytic AB heterodimers that form a heterohexamer, three peripheral stalks each consisting of EG heterodimers, one central rotor including subunits D and F, and the regulatory subunits C and H. The proton translocation complex V0 consists of the proton transport subunit a, a ring of proteolipid subunits c9c'', rotary subunit d, subunits e and f, and the accessory subunits ATP6AP1/Ac45 and ATP6AP2/PRR. Interacts with AP2M1.

The protein resides in the cytoplasmic vesicle. Its subcellular location is the clathrin-coated vesicle membrane. Functionally, subunit of the V1 complex of vacuolar(H+)-ATPase (V-ATPase), a multisubunit enzyme composed of a peripheral complex (V1) that hydrolyzes ATP and a membrane integral complex (V0) that translocates protons. V-ATPase is responsible for acidifying and maintaining the pH of intracellular compartments and in some cell types, is targeted to the plasma membrane, where it is responsible for acidifying the extracellular environment. Subunit H is essential for V-ATPase activity, but not for the assembly of the complex. Involved in the endocytosis mediated by clathrin-coated pits, required for the formation of endosomes. The polypeptide is V-type proton ATPase subunit H (ATP6V1H) (Sus scrofa (Pig)).